The sequence spans 498 residues: Glycerol kinase (498 aa).

Residue Thr12 coordinates ADP. ATP contacts are provided by Thr12, Thr13, and Ser14. Thr12 lines the sn-glycerol 3-phosphate pocket. Arg16 contributes to the ADP binding site. Residues Arg82, Glu83, Tyr134, and Asp243 each contribute to the sn-glycerol 3-phosphate site. 5 residues coordinate glycerol: Arg82, Glu83, Tyr134, Asp243, and Gln244. The ADP site is built by Thr265 and Gly308. Thr265, Gly308, Gln312, and Gly411 together coordinate ATP. Gly411 is a binding site for ADP.

Belongs to the FGGY kinase family.

The catalysed reaction is glycerol + ATP = sn-glycerol 3-phosphate + ADP + H(+). Its pathway is polyol metabolism; glycerol degradation via glycerol kinase pathway; sn-glycerol 3-phosphate from glycerol: step 1/1. With respect to regulation, inhibited by fructose 1,6-bisphosphate (FBP). Key enzyme in the regulation of glycerol uptake and metabolism. Catalyzes the phosphorylation of glycerol to yield sn-glycerol 3-phosphate. In Brucella suis biovar 1 (strain 1330), this protein is Glycerol kinase.